The chain runs to 221 residues: Probable septum site-determining protein MinC (221 aa).

The protein belongs to the MinC family. Interacts with MinD and FtsZ.

Cell division inhibitor that blocks the formation of polar Z ring septums. Rapidly oscillates between the poles of the cell to destabilize FtsZ filaments that have formed before they mature into polar Z rings. Prevents FtsZ polymerization. In Shewanella sp. (strain MR-7), this protein is Probable septum site-determining protein MinC.